The following is a 206-amino-acid chain: Small ribosomal subunit protein uS4 (206 aa).

One can recognise an S4 RNA-binding domain in the interval 96 to 158 (SRLDNVVYRM…AKKQLRIQNA (63 aa)).

This sequence belongs to the universal ribosomal protein uS4 family. In terms of assembly, part of the 30S ribosomal subunit. Contacts protein S5. The interaction surface between S4 and S5 is involved in control of translational fidelity.

One of the primary rRNA binding proteins, it binds directly to 16S rRNA where it nucleates assembly of the body of the 30S subunit. In terms of biological role, with S5 and S12 plays an important role in translational accuracy. This Francisella tularensis subsp. holarctica (strain OSU18) protein is Small ribosomal subunit protein uS4.